Consider the following 246-residue polypeptide: Carboxy-S-adenosyl-L-methionine synthase (246 aa).

S-adenosyl-L-methionine contacts are provided by residues Y43, 68–70, 93–94, 121–122, N136, and R203; these read GCS, DN, and DI.

This sequence belongs to the class I-like SAM-binding methyltransferase superfamily. Cx-SAM synthase family. In terms of assembly, homodimer.

The enzyme catalyses prephenate + S-adenosyl-L-methionine = carboxy-S-adenosyl-L-methionine + 3-phenylpyruvate + H2O. In terms of biological role, catalyzes the conversion of S-adenosyl-L-methionine (SAM) to carboxy-S-adenosyl-L-methionine (Cx-SAM). This is Carboxy-S-adenosyl-L-methionine synthase from Vibrio cholerae serotype O1 (strain ATCC 39541 / Classical Ogawa 395 / O395).